Consider the following 404-residue polypeptide: Zinc metalloprotease Rip1 (404 aa).

A helical transmembrane segment spans residues M1 to H21. H21 contacts Zn(2+). Residue E22 is part of the active site. Position 25 (H25) interacts with Zn(2+). Residues P104 to L124 traverse the membrane as a helical segment. The region spanning V121–G203 is the PDZ domain. D202 contacts Zn(2+). The next 2 membrane-spanning stretches (helical) occupy residues L313 to L333 and L373 to T393.

This sequence belongs to the peptidase M50B family. Zn(2+) is required as a cofactor.

It localises to the cell membrane. In terms of biological role, a probable site-2 protease (S2P) that cleaves type-2 transmembrane proteins within their membrane-spanning domains. Degrades anti-sigma factors RskA, RslA and RsmA, releasing sigma factors SigK, SigL and SigM from the cellular membrane, activating signaling pathways. Does not act on RsdA. Regulates the composition of extractable mycolic acids in the cell envelope in response to changes in membrane fluidity. Mediates transcriptional regulation of mycolic acid biosynthetic genes in response to detergent. Probably also cleaves PbpB (PBP3, FtsI); this cleavage is inhibited by Wag31-PbpBI interaction. Functionally, regulated intramembrane proteolysis (RIP) occurs when an extracytoplasmic signal (possibly oxidative stress) triggers a concerted proteolytic cascade to transmit information and elicit cellular responses. The membrane-spanning regulatory substrate protein (includes anti-sigma factors RskA, RslA, RsmA, and PbpB) is first cut extracytoplasmically (site-1 protease, S1P), then within the membrane itself (site-2 protease, S2P, this entry), while cytoplasmic proteases finish degrading the regulatory protein, liberating the effector protein (ECF sigma factors SigK, SigL and SigM). The polypeptide is Zinc metalloprotease Rip1 (rip1) (Mycobacterium tuberculosis (strain ATCC 35801 / TMC 107 / Erdman)).